The chain runs to 305 residues: UDP-3-O-acyl-N-acetylglucosamine deacetylase (305 aa).

Residues His79, His238, and Asp242 each coordinate Zn(2+). His265 functions as the Proton donor in the catalytic mechanism.

This sequence belongs to the LpxC family. The cofactor is Zn(2+).

It carries out the reaction a UDP-3-O-[(3R)-3-hydroxyacyl]-N-acetyl-alpha-D-glucosamine + H2O = a UDP-3-O-[(3R)-3-hydroxyacyl]-alpha-D-glucosamine + acetate. It participates in glycolipid biosynthesis; lipid IV(A) biosynthesis; lipid IV(A) from (3R)-3-hydroxytetradecanoyl-[acyl-carrier-protein] and UDP-N-acetyl-alpha-D-glucosamine: step 2/6. Functionally, catalyzes the hydrolysis of UDP-3-O-myristoyl-N-acetylglucosamine to form UDP-3-O-myristoylglucosamine and acetate, the committed step in lipid A biosynthesis. In Enterobacter sp. (strain 638), this protein is UDP-3-O-acyl-N-acetylglucosamine deacetylase.